The following is a 493-amino-acid chain: Cytochrome c-552 (493 aa).

A signal peptide spans 1 to 25; that stretch reads MEKKLKSWQGWLLFCGAMAVVFVLG. Position 116 (histidine 116) interacts with heme c. Cysteine 144, cysteine 147, and lysine 148 together coordinate heme. Heme c contacts are provided by cysteine 182, cysteine 185, histidine 186, cysteine 224, cysteine 227, and histidine 228. Residues glutamate 230, tyrosine 231, lysine 276, and glutamine 278 each coordinate Ca(2+). Tyrosine 231 provides a ligand contact to substrate. Histidine 279 provides a ligand contact to substrate. Residues histidine 290, cysteine 297, cysteine 300, histidine 301, histidine 315, cysteine 328, cysteine 331, histidine 332, and histidine 407 each contribute to the heme c site.

This sequence belongs to the cytochrome c-552 family. Ca(2+) serves as cofactor. It depends on heme c as a cofactor.

It is found in the periplasm. The catalysed reaction is 6 Fe(III)-[cytochrome c] + NH4(+) + 2 H2O = 6 Fe(II)-[cytochrome c] + nitrite + 8 H(+). Its pathway is nitrogen metabolism; nitrate reduction (assimilation). In terms of biological role, catalyzes the reduction of nitrite to ammonia, consuming six electrons in the process. In Bacteroides fragilis (strain ATCC 25285 / DSM 2151 / CCUG 4856 / JCM 11019 / LMG 10263 / NCTC 9343 / Onslow / VPI 2553 / EN-2), this protein is Cytochrome c-552.